The following is a 200-amino-acid chain: Late embryogenesis abundant protein 19 (200 aa).

2 disordered regions span residues methionine 1–valine 158 and threonine 172–histidine 200. Composition is skewed to basic and acidic residues over residues glycine 13–alanine 23, serine 30–serine 42, glutamine 53–threonine 81, alanine 88–aspartate 97, and glutamate 105–alanine 114. Residues glycine 52 to threonine 81 adopt a coiled-coil conformation. Over residues alanine 115–glutamine 130 the composition is skewed to low complexity. Positions serine 145–serine 156 are enriched in polar residues. Basic and acidic residues predominate over residues threonine 172–asparagine 183. The segment covering threonine 186–histidine 200 has biased composition (low complexity).

This sequence belongs to the LEA type 4 family. In terms of tissue distribution, expressed in the shoot apex and leaves.

In terms of biological role, involved in response to drought stress. The sequence is that of Late embryogenesis abundant protein 19 from Oryza sativa subsp. indica (Rice).